Reading from the N-terminus, the 510-residue chain is Protein HGV2 (510 aa).

The segment at 95–227 is disordered; it reads GVPEEDADGD…KENESEEDPD (133 aa). A compositionally biased stretch (acidic residues) spans 98 to 110; the sequence is EEDADGDSDQEQE. Composition is skewed to basic and acidic residues over residues 111 to 129 and 142 to 199; these read QFEK…REEV and EERG…DKPV. A compositionally biased stretch (low complexity) spans 204 to 217; that stretch reads TEEPGTSGTSASSS. 2 TPR repeats span residues 260–293 and 302–335; these read AQCH…QKDL and AETY…LEAR. Residues 391-510 form a disordered region; sequence DGSPFRQASE…TPKKDAAKRR (120 aa). Positions 398–411 are enriched in low complexity; the sequence is ASEGESSSGLGAST. 2 short sequence motifs (nuclear localization signal) span residues 444-451 and 465-471; these read VRRKRPSP and SKKAKQE. The span at 459–471 shows a compositional bias: basic and acidic residues; sequence ESKENESKKAKQE.

It belongs to the NASP family. In terms of tissue distribution, embryo and larvae.

Its subcellular location is the nucleus. Functionally, may function as a nucleosome assembly factor during rapid embryonic cell divisions. The sequence is that of Protein HGV2 (HGV2) from Halocynthia roretzi (Sea squirt).